Here is a 257-residue protein sequence, read N- to C-terminus: Glutamate racemase (257 aa).

Residues 12–13 (DS) and 44–45 (YG) each bind substrate. Cys75 acts as the Proton donor/acceptor in catalysis. Position 76–77 (76–77 (NT)) interacts with substrate. Cys185 serves as the catalytic Proton donor/acceptor. 186 to 187 (TH) lines the substrate pocket.

Belongs to the aspartate/glutamate racemases family.

It carries out the reaction L-glutamate = D-glutamate. It functions in the pathway cell wall biogenesis; peptidoglycan biosynthesis. Its function is as follows. Provides the (R)-glutamate required for cell wall biosynthesis. The chain is Glutamate racemase from Clostridium botulinum (strain Langeland / NCTC 10281 / Type F).